The chain runs to 514 residues: 2,3-bisphosphoglycerate-independent phosphoglycerate mutase (514 aa).

Mn(2+) is bound by residues aspartate 14 and serine 64. Catalysis depends on serine 64, which acts as the Phosphoserine intermediate. Residues histidine 125, 155 to 156 (RD), arginine 187, arginine 193, 263 to 266 (RADR), and lysine 336 contribute to the substrate site. Residues aspartate 403, histidine 407, aspartate 444, histidine 445, and histidine 463 each coordinate Mn(2+).

Belongs to the BPG-independent phosphoglycerate mutase family. Monomer. The cofactor is Mn(2+).

The enzyme catalyses (2R)-2-phosphoglycerate = (2R)-3-phosphoglycerate. It functions in the pathway carbohydrate degradation; glycolysis; pyruvate from D-glyceraldehyde 3-phosphate: step 3/5. In terms of biological role, catalyzes the interconversion of 2-phosphoglycerate and 3-phosphoglycerate. The protein is 2,3-bisphosphoglycerate-independent phosphoglycerate mutase of Shewanella sp. (strain MR-4).